The primary structure comprises 185 residues: Translation initiation factor IF-3, chloroplastic (185 aa).

Belongs to the IF-3 family. In terms of assembly, monomer.

The protein localises to the plastid. It is found in the chloroplast. In terms of biological role, IF-3 binds to the 30S ribosomal subunit and shifts the equilibrium between 70S ribosomes and their 50S and 30S subunits in favor of the free subunits, thus enhancing the availability of 30S subunits on which protein synthesis initiation begins. This is Translation initiation factor IF-3, chloroplastic from Cyanidium caldarium (Red alga).